The primary structure comprises 976 residues: Mast/stem cell growth factor receptor kita (976 aa).

An N-terminal signal peptide occupies residues 1-21 (MEYHCVLFTVLLQLIIQPGRS). Over 22–515 (RPTITPEGPR…NTVPHELFTP (494 aa)) the chain is Extracellular. Ig-like C2-type domains are found at residues 23 to 105 (PTIT…VYVK), 100 to 199 (IYVY…LTVR), 206 to 301 (PPIT…VWVN), 308 to 402 (INIT…FEVH), and 399 to 504 (FEVH…FSIS). N39 and N47 each carry an N-linked (GlcNAc...) asparagine glycan. 4 disulfides stabilise this stretch: C44-C89, C131-C180, C146-C177, and C228-C285. N-linked (GlcNAc...) asparagine glycosylation is found at N282, N309, N315, N352, N449, and N477. Cysteines 422 and 488 form a disulfide. Residues 516–536 (LLIGFVAAAVILVLILIVLTY) traverse the membrane as a helical segment. The Cytoplasmic portion of the chain corresponds to 537-976 (KYMQKPKYQI…DRSSPSHPVV (440 aa)). Y559 contributes to the Mg(2+) binding site. 2 positions are modified to phosphotyrosine; by autocatalysis: Y559 and Y561. The Protein kinase domain maps to 580-922 (LRFGKTLGSG…ISDSTKHIYL (343 aa)). ATP-binding positions include 587-594 (GSGAFGKV), K614, and 662-668 (EYCCFGD). Y691 and Y707 each carry phosphotyrosine; by autocatalysis. The Proton acceptor role is filled by D777. Position 781 (R781) interacts with ATP. Positions 782 and 795 each coordinate Mg(2+). A phosphotyrosine; by autocatalysis mark is found at Y808 and Y921. Residues 929–976 (PAAPGPREESSSHVHRLNSVGSHSTATQPLLSSNDVFLDRSSPSHPVV) are disordered. The span at 947–976 (SVGSHSTATQPLLSSNDVFLDRSSPSHPVV) shows a compositional bias: polar residues.

Belongs to the protein kinase superfamily. Tyr protein kinase family. CSF-1/PDGF receptor subfamily. Ubiquitinated. Rapidly ubiquitinated after autophosphorylation induced by kitlg/scf binding, leading to internalization and degradation. In terms of processing, autophosphorylated on tyrosine residues. Phosphorylated tyrosine residues are important for interaction with specific binding partners. In terms of tissue distribution, expressed in cells of the neural crest-melanocyte lineage. In the embryo, also expressed in mesodermal cells that give rise to hematopoietic precursors, notochord, neural crest-derived cells of the branchial arches, pineal gland, retina and mechanoreceptive sensory cells of lateral line neuromasts. Not detected in primordial germ cells or larval gut.

It is found in the cell membrane. It carries out the reaction L-tyrosyl-[protein] + ATP = O-phospho-L-tyrosyl-[protein] + ADP + H(+). Functionally, tyrosine-protein kinase that acts as a cell-surface receptor for the cytokine kitlg/scf and plays a role in the regulation of cell survival and proliferation, hematopoiesis, stem cell maintenance, gametogenesis, and in mast cell development, migration and function. Required for the migration of cells in the melanocyte lineage and the survival of embryonic melanocytes. Required for the differentiation of some, but not all, melanocytes. Not essential for hematopoiesis or primordial germ cell development. This is Mast/stem cell growth factor receptor kita (kita) from Danio rerio (Zebrafish).